Consider the following 784-residue polypeptide: MKEGSSISVAVRVRPFTEREKGLLAETPKSKEFLGDGSLAVSNTSSNTFCTNGIRKIVRVLDDNVLIFDPPEENPLAKVQKSLLPAGKRFRDVRYAFDRLFGEEASQEDVYKGTTEPLLDSVLQGYNATVFAYGATGCGKTHTISGRPDDPGIIFLTMRALLDRVEGLKRTMNVDISVSYLEIYNEKIRDLLVQDPLSMEKPKSLNICEDAEQNVSVPGLSYFTPTNLEEVMEIIIRGNSNRTMSPTEANAVSSRSHAVLQIYITQTPKSGEKQEESESQNSHKVRSVFSFIDLAGSERASATKNRGKRLVEGANINRSLLALGNCINSLCEPRRRQHVPYRDSKLTRLLKFSLGGNCRTCMIVCISPSSEHYDETHNTLKYGNRAKNIKTKVSRNVVSVDRHVSEYVRTIYELRQKVSILQKRIAEESKQLALNKEVRKISSREIKMLDARSMLKNSFDGSRDLQKSLIEHVRTLRRIEDEITLTKMWISIAKESDAMSGHNIKSVETRLAKLYDQRSLITAKVNPEEICKTFQNSISHIVSSFKGEGADMYADMLQDDVDLLKSIIENQILDAKHESETFSSTSRKLIQNLFLLFPLLPGNAIDVNESLARAFDQLVGIVPSEPTIQVPNLIEKGKAPLLSMFEIPRSPSRFKARSPSKAARVLKKPLKKRVRFSEVPTTSSVPPVEIKNKDSKPKVEKSLDKHNMNNDRSFLVPSRDARNSLTSLSLHSNVAKNKSSHSSKWPTHTLSPIITTALKQPVRRISLVSQPLQKTGGTENTPNA.

Residues 6–389 (SISVAVRVRP…LKYGNRAKNI (384 aa)) enclose the Kinesin motor domain. Position 134-141 (134-141 (GATGCGKT)) interacts with ATP. 2 coiled-coil regions span residues 405-440 (SEYV…EVRK) and 463-483 (RDLQ…EDEI). Residues 677 to 715 (SEVPTTSSVPPVEIKNKDSKPKVEKSLDKHNMNNDRSFL) are disordered. Residues 690-709 (IKNKDSKPKVEKSLDKHNMN) are compositionally biased toward basic and acidic residues.

Belongs to the TRAFAC class myosin-kinesin ATPase superfamily. Kinesin family. Kinesin II subfamily. Heterodimer with klp5.

It is found in the cytoplasm. The protein resides in the cytoskeleton. Its subcellular location is the chromosome. It localises to the centromere. The protein localises to the kinetochore. It is found in the spindle. Its function is as follows. Has a role in establishing metaphase during mitosis. Required for chromosome segregation where it generates tension during kinetochore capturing. This chain is Kinesin-like protein 6 (klp6), found in Schizosaccharomyces pombe (strain 972 / ATCC 24843) (Fission yeast).